Reading from the N-terminus, the 291-residue chain is tRNA pseudouridine synthase B (291 aa).

Asp-41 acts as the Nucleophile in catalysis.

It belongs to the pseudouridine synthase TruB family. Type 1 subfamily.

It catalyses the reaction uridine(55) in tRNA = pseudouridine(55) in tRNA. In terms of biological role, responsible for synthesis of pseudouridine from uracil-55 in the psi GC loop of transfer RNAs. In Parasynechococcus marenigrum (strain WH8102), this protein is tRNA pseudouridine synthase B.